We begin with the raw amino-acid sequence, 400 residues long: Acetate kinase (400 aa).

Residue Asn7 participates in Mg(2+) binding. Lys14 contacts ATP. Arg91 serves as a coordination point for substrate. Catalysis depends on Asp148, which acts as the Proton donor/acceptor. ATP is bound by residues 208-212, 284-286, and 332-336; these read HLGNG, DMR, and GVGEN. Glu384 is a binding site for Mg(2+).

Belongs to the acetokinase family. In terms of assembly, homodimer. The cofactor is Mg(2+). Mn(2+) serves as cofactor.

It is found in the cytoplasm. The catalysed reaction is acetate + ATP = acetyl phosphate + ADP. It participates in metabolic intermediate biosynthesis; acetyl-CoA biosynthesis; acetyl-CoA from acetate: step 1/2. Functionally, catalyzes the formation of acetyl phosphate from acetate and ATP. Can also catalyze the reverse reaction. The sequence is that of Acetate kinase from Coprothermobacter proteolyticus (strain ATCC 35245 / DSM 5265 / OCM 4 / BT).